The sequence spans 280 residues: tRNase Z TRZ1 (280 aa).

Belongs to the RNase Z family. In terms of assembly, homodimer. Zn(2+) is required as a cofactor. It depends on Ca(2+) as a cofactor. The cofactor is Mn(2+). Requires Mg(2+) as cofactor.

It is found in the cytoplasm. It catalyses the reaction Endonucleolytic cleavage of RNA, removing extra 3' nucleotides from tRNA precursor, generating 3' termini of tRNAs. A 3'-hydroxy group is left at the tRNA terminus and a 5'-phosphoryl group is left at the trailer molecule.. In terms of biological role, zinc phosphodiesterase, which displays tRNA 3'-processing endonuclease activity. Involved in tRNA maturation, by removing a 3'-trailer from precursor tRNA. Can use bis-(p-nitophenyl) phosphate (bpNPP) as substrate. Involved in the processing of small nucleolar RNAs (snoRNAs). The protein is tRNase Z TRZ1 of Arabidopsis thaliana (Mouse-ear cress).